Here is a 185-residue protein sequence, read N- to C-terminus: Elongation factor P (185 aa).

The protein belongs to the elongation factor P family.

The protein localises to the cytoplasm. Its pathway is protein biosynthesis; polypeptide chain elongation. Involved in peptide bond synthesis. Stimulates efficient translation and peptide-bond synthesis on native or reconstituted 70S ribosomes in vitro. Probably functions indirectly by altering the affinity of the ribosome for aminoacyl-tRNA, thus increasing their reactivity as acceptors for peptidyl transferase. The sequence is that of Elongation factor P from Nitratidesulfovibrio vulgaris (strain DP4) (Desulfovibrio vulgaris).